The primary structure comprises 901 residues: Viral-enhancing factor (901 aa).

Residues 27–330 (HRRTEVGVVL…IFTWLYNPQR (304 aa)) form the Peptidase M60 domain. Residues Asn265, Asn278, Asn339, Asn349, Asn540, Asn594, Asn595, Asn642, Asn683, and Asn698 are each glycosylated (N-linked (GlcNAc...) asparagine; by host).

Involved in disruption of the peritrophic membrane and fusion of nucleocapsids with midgut cells. The polypeptide is Viral-enhancing factor (VEF) (Pseudalatia unipuncta granulosis virus (PuGV)).